Reading from the N-terminus, the 84-residue chain is ATP synthase subunit c (84 aa).

Helical transmembrane passes span I9 to L29 and I54 to I74.

The protein belongs to the ATPase C chain family. F-type ATPases have 2 components, F(1) - the catalytic core - and F(0) - the membrane proton channel. F(1) has five subunits: alpha(3), beta(3), gamma(1), delta(1), epsilon(1). F(0) has three main subunits: a(1), b(2) and c(10-14). The alpha and beta chains form an alternating ring which encloses part of the gamma chain. F(1) is attached to F(0) by a central stalk formed by the gamma and epsilon chains, while a peripheral stalk is formed by the delta and b chains.

It is found in the cell inner membrane. Its function is as follows. F(1)F(0) ATP synthase produces ATP from ADP in the presence of a proton or sodium gradient. F-type ATPases consist of two structural domains, F(1) containing the extramembraneous catalytic core and F(0) containing the membrane proton channel, linked together by a central stalk and a peripheral stalk. During catalysis, ATP synthesis in the catalytic domain of F(1) is coupled via a rotary mechanism of the central stalk subunits to proton translocation. In terms of biological role, key component of the F(0) channel; it plays a direct role in translocation across the membrane. A homomeric c-ring of between 10-14 subunits forms the central stalk rotor element with the F(1) delta and epsilon subunits. The polypeptide is ATP synthase subunit c (Histophilus somni (strain 2336) (Haemophilus somnus)).